The primary structure comprises 309 residues: Homoserine kinase (309 aa).

95 to 105 serves as a coordination point for ATP; it reads PQSRGLGSSAA.

Belongs to the GHMP kinase family. Homoserine kinase subfamily.

It is found in the cytoplasm. The catalysed reaction is L-homoserine + ATP = O-phospho-L-homoserine + ADP + H(+). The protein operates within amino-acid biosynthesis; L-threonine biosynthesis; L-threonine from L-aspartate: step 4/5. Functionally, catalyzes the ATP-dependent phosphorylation of L-homoserine to L-homoserine phosphate. The protein is Homoserine kinase of Corynebacterium glutamicum (strain R).